Reading from the N-terminus, the 483-residue chain is Glutamate--tRNA ligase (483 aa).

The short motif at 11–21 (PSPTGHLHIGN) is the 'HIGH' region element. Residues cysteine 108, cysteine 110, histidine 135, and aspartate 137 each coordinate Zn(2+). The 'KMSKS' region motif lies at 252 to 256 (KLSKR). ATP is bound at residue lysine 255.

Belongs to the class-I aminoacyl-tRNA synthetase family. Glutamate--tRNA ligase type 1 subfamily. As to quaternary structure, monomer. Requires Zn(2+) as cofactor.

The protein resides in the cytoplasm. The catalysed reaction is tRNA(Glu) + L-glutamate + ATP = L-glutamyl-tRNA(Glu) + AMP + diphosphate. In terms of biological role, catalyzes the attachment of glutamate to tRNA(Glu) in a two-step reaction: glutamate is first activated by ATP to form Glu-AMP and then transferred to the acceptor end of tRNA(Glu). The sequence is that of Glutamate--tRNA ligase from Bacillus subtilis (strain 168).